We begin with the raw amino-acid sequence, 109 residues long: Putative membrane protein insertion efficiency factor (109 aa).

Belongs to the UPF0161 family.

The protein localises to the cell inner membrane. Could be involved in insertion of integral membrane proteins into the membrane. This Rhodopseudomonas palustris (strain BisA53) protein is Putative membrane protein insertion efficiency factor.